The primary structure comprises 509 residues: MEEFQRYIELDRSWQHNFFYPLIFQEYIYGFAYDHGLNKSILLENAGDKKYSLLIVKRLITRMYQQNHLILSDKNSNQNDFFGHKHKKNLYYQMISEGFAVIVEIPFSLLLISSLEAKEKKIVKSNNLRSIHSIFPFFEDKFLHLNYALEILIPYPIHLEILVQTLRYWVKDASSLHLLRFFLYEYRNCNSLITPPKSISIFSKSNQRLFLFLYNFHVCEYESLFVFLCNQSSHLRSISFGALLERIYFYGKLEYLVKVKTFTKYLRVILWFFKDPFLHYVRYRGKSILTSKGTSFLMHKWKYYLINFWQSRFSLWSQPRRIYINPLSKHSLDFMGFFSSVRLNSSVVRSQMVENSFLIDNPIKKFDTIVRIIPLVGSLAKAKFCNVLGHPISKSVWTDLLDSDIIDRFGRICRNLSHYYSGSSRKKSLYQIKYILRLSCARTLARKHKSTVRAFLKRLGSEFLEEFFTEEERILSLILPRDSSISRRFYRGPIWYLDIFCIHDLVNDE.

This sequence belongs to the intron maturase 2 family. MatK subfamily.

It localises to the plastid. The protein localises to the chloroplast. Usually encoded in the trnK tRNA gene intron. Probably assists in splicing its own and other chloroplast group II introns. This is Maturase K from Portulaca oleracea (Common purslane).